The sequence spans 666 residues: MSKSKHAVELCSLLVDDIYGELSSRIFTILLRRGRLPMNALKRHTQLTTRQLKLGLTVLVRQNLVYHNSEGSDTHYEANIDAAYALVRSGKILEIAEERFGSVAAEIMGQLVLLGHAKISDIIAELNKNHEPHANGNSNETNGATNGNGVHSYPSGQLNHTLIQLLEEGFIQPVGQNMFRSPTDSYNAVEKALLQDSYGGATRGTKQKDELRMRIRGQLQELRAQVPNWKPVGYNRSSTNGHTNDIASKRRRLSHSGGATNGYDFGDDESSKLDGNLVLRINHEKCTVFMRNRRLVELANSRIGVTTSYIYAELLRLMAEQIPRCRPDPRIDDAVDDADGPSIIITTQELTDALSKTINVSTGIGKATSQKIDTSRLDKLQNGRKRKAQDEAEVEGVASSDEESEDDHKPFTNGNGHAMDVDEDDPFSDQPGANTSKRAVTFKDRDRTPPPTESRQARMMHVMSHLQLLAADDCQLLRKCGARQMGEWTVDFERVIDRLRESELDSIIYENFGQIGHRLVRVMRKMGKLEEKHIAKLALIKQQDSRTTLVNMQMHGMVDIQEVPRDTGRMIVRTIHLWFCDEDRVTSLLLDRTYKAMSRCLQRLDVEKRRKANIIALSERTDVQGQEEAFLRPEQMNQLREIRAKEEDLLGQICRLDELVGIFQDY.

Disordered regions lie at residues 130-153 and 375-455; these read HEPHANGNSNETNGATNGNGVHSY and SRLD…TESR. The span at 135-153 shows a compositional bias: polar residues; the sequence is NGNSNETNGATNGNGVHSY. Residues 593 to 614 form a leucine-zipper region; that stretch reads TYKAMSRCLQRLDVEKRRKANI.

The protein belongs to the RNA polymerase beta chain family. As to quaternary structure, component of the RNA polymerase III (Pol III) complex consisting of 17 subunits.

The protein localises to the nucleus. Its function is as follows. DNA-dependent RNA polymerase catalyzes the transcription of DNA into RNA using the four ribonucleoside triphosphates as substrates. Specific core component of RNA polymerase III which synthesizes small RNAs, such as 5S rRNA and tRNAs. This Botryotinia fuckeliana (strain B05.10) (Noble rot fungus) protein is DNA-directed RNA polymerase III subunit rpc3 (rpc82).